The chain runs to 165 residues: MADNNKKPAGLTEKKANRRGAARLAAVQALYQMDIAGAGINDIFAEFESHWLGNEVEGDTYLPAEAAFFRDVVSGVVRDQKKLDPLIDEALSKGWPLKRIEAILRAVLRAGAYELQHRKDVPGRVVVSEYVDVANAFVDREETGMVNAVLDQIGRQFRGDEFGRG.

Belongs to the NusB family.

Involved in transcription antitermination. Required for transcription of ribosomal RNA (rRNA) genes. Binds specifically to the boxA antiterminator sequence of the ribosomal RNA (rrn) operons. The sequence is that of Transcription antitermination protein NusB from Bradyrhizobium diazoefficiens (strain JCM 10833 / BCRC 13528 / IAM 13628 / NBRC 14792 / USDA 110).